A 485-amino-acid polypeptide reads, in one-letter code: Peroxisomal catalase (485 aa).

Catalysis depends on residues His53 and Asn126. Tyr336 serves as a coordination point for heme.

The protein belongs to the catalase family. As to quaternary structure, homotetramer. The cofactor is heme.

Its subcellular location is the peroxisome matrix. It carries out the reaction 2 H2O2 = O2 + 2 H2O. Its function is as follows. Catalyzes the degradation of hydrogen peroxide (H(2)O(2)) generated by peroxisomal oxidases to water and oxygen, thereby protecting cells from the toxic effects of hydrogen peroxide. The protein is Peroxisomal catalase (CAT1) of Candida albicans (strain SC5314 / ATCC MYA-2876) (Yeast).